A 937-amino-acid polypeptide reads, in one-letter code: C-1-tetrahydrofolate synthase, cytoplasmic (937 aa).

The interval 1 to 309 (MALLLEGTSL…TLLPLKLQTP (309 aa)) is methylenetetrahydrofolate dehydrogenase and cyclohydrolase. Substrate is bound by residues 50–54 (YVRMK) and 97–99 (VQL). Residues 168–170 (GRS) and Ser-193 contribute to the NADP(+) site. A substrate-binding site is contributed by 268 to 272 (PGSVG). The formyltetrahydrofolate synthetase stretch occupies residues 310-937 (VPSDIEIARS…AENGDIVGLS (628 aa)). 374–381 (TPFGEGKS) provides a ligand contact to ATP.

This sequence in the N-terminal section; belongs to the tetrahydrofolate dehydrogenase/cyclohydrolase family. It in the C-terminal section; belongs to the formate--tetrahydrofolate ligase family. In terms of assembly, homodimer.

It is found in the cytoplasm. The catalysed reaction is (6R)-5,10-methylene-5,6,7,8-tetrahydrofolate + NADP(+) = (6R)-5,10-methenyltetrahydrofolate + NADPH. The enzyme catalyses (6R)-5,10-methenyltetrahydrofolate + H2O = (6R)-10-formyltetrahydrofolate + H(+). It catalyses the reaction (6S)-5,6,7,8-tetrahydrofolate + formate + ATP = (6R)-10-formyltetrahydrofolate + ADP + phosphate. Its pathway is one-carbon metabolism; tetrahydrofolate interconversion. The protein is C-1-tetrahydrofolate synthase, cytoplasmic of Schizosaccharomyces pombe (strain 972 / ATCC 24843) (Fission yeast).